Consider the following 1059-residue polypeptide: RNA-binding protein 26 (1059 aa).

Composition is skewed to basic and acidic residues over residues 98–114 and 130–147; these read EKEIKKDEVNKEEEKEK and RHKDTRENRKRSNSDRES. The tract at residues 98-275 is disordered; sequence EKEIKKDEVN…PVDNSYASGS (178 aa). The span at 172–182 shows a compositional bias: polar residues; it reads LNSNKVQNAKN. Positions 184–213 are enriched in basic and acidic residues; sequence RSRDDRKRDDRFRKREYDRNVPRRDSYRDR. A compositionally biased stretch (basic residues) spans 214–231; sequence YNRRRGRSRSYSRSRSRS. Basic and acidic residues predominate over residues 232–266; that stretch reads WSKERQRDRDRSRSRTRSRDKDSGKPKFDLDRPDP. Residues 327–355 form a C3H1-type zinc finger; the sequence is QMQKKRCRDYDEKGFCMRGDMCPFDHGSD. The span at 375–428 shows a compositional bias: pro residues; that stretch reads PVLEGPPPPGLPPPPSLLTPPPVNLQPPPVPPPGPLPPSLPPVTGPPPPLPPLQ. Residues 375 to 443 form a disordered region; that stretch reads PVLEGPPPPG…APPNSATSSV (69 aa). Positions 434 to 443 are enriched in low complexity; the sequence is APPNSATSSV. Residues 581–655 form the RRM 1 domain; it reads TKLELRRIPP…RFIRMYWHRE (75 aa). Positions 771-873 form a coiled coil; it reads GDAQKKKQEA…LLDTELDLYN (103 aa). The RRM 2 domain maps to 942 to 1011; that stretch reads RALKISGFTE…QDLKLAWNKP (70 aa). The interval 1010–1059 is disordered; the sequence is KPVPNASSTEVEDADQEEEEFHEDSIVDDSLLQDDDEEEEDDNESRSWRR. Composition is skewed to acidic residues over residues 1019–1031 and 1040–1052; these read EVEDADQEEEEFH and LLQDDDEEEEDDN.

May be involved in the turnover of nuclear polyadenylated (pA+) RNA. In Xenopus laevis (African clawed frog), this protein is RNA-binding protein 26.